Here is a 151-residue protein sequence, read N- to C-terminus: UPF0208 membrane protein YfbV (151 aa).

Helical transmembrane passes span 46 to 65 (YAIRFMPPIAVFTLCWQIAL) and 69 to 91 (LGPAVATALFALSLPMQGLWWLG).

Belongs to the UPF0208 family.

The protein localises to the cell inner membrane. The protein is UPF0208 membrane protein YfbV of Shigella boydii serotype 18 (strain CDC 3083-94 / BS512).